The following is a 262-amino-acid chain: uncharacterized protein (262 aa).

6 helical membrane-spanning segments follow: residues 21–41 (ILITYFLCWAGFLFSFSVGKF), 94–114 (IVSNFMGCLIIMFALGALAYL), 139–159 (LLILFIFTVINPLTGLIGVNL), 164–184 (LIAVLPHGFFEFFGFATAVVV), 205–225 (IVILIACSFIFIFIAGMLEPI), and 240–260 (LLAAFATGYKNLFLYLISMLF).

It localises to the cell membrane. This is an uncharacterized protein from Methanocaldococcus jannaschii (strain ATCC 43067 / DSM 2661 / JAL-1 / JCM 10045 / NBRC 100440) (Methanococcus jannaschii).